A 313-amino-acid polypeptide reads, in one-letter code: Homoserine O-succinyltransferase (313 aa).

The active-site Acyl-thioester intermediate is the Cys142. 2 residues coordinate substrate: Lys163 and Ser192. The Proton acceptor role is filled by His235. The active site involves Glu237. Substrate is bound at residue Arg249.

The protein belongs to the MetA family.

It localises to the cytoplasm. It carries out the reaction L-homoserine + succinyl-CoA = O-succinyl-L-homoserine + CoA. The protein operates within amino-acid biosynthesis; L-methionine biosynthesis via de novo pathway; O-succinyl-L-homoserine from L-homoserine: step 1/1. Functionally, transfers a succinyl group from succinyl-CoA to L-homoserine, forming succinyl-L-homoserine. This chain is Homoserine O-succinyltransferase, found in Vibrio campbellii (strain ATCC BAA-1116).